The following is a 362-amino-acid chain: UDP-N-acetylglucosamine--N-acetylmuramyl-(pentapeptide) pyrophosphoryl-undecaprenol N-acetylglucosamine transferase (362 aa).

UDP-N-acetyl-alpha-D-glucosamine-binding positions include 11 to 13 (TGG), Asn-124, Arg-163, Ser-191, Ile-246, and Gln-291.

It belongs to the glycosyltransferase 28 family. MurG subfamily.

The protein localises to the cell inner membrane. It carries out the reaction di-trans,octa-cis-undecaprenyl diphospho-N-acetyl-alpha-D-muramoyl-L-alanyl-D-glutamyl-meso-2,6-diaminopimeloyl-D-alanyl-D-alanine + UDP-N-acetyl-alpha-D-glucosamine = di-trans,octa-cis-undecaprenyl diphospho-[N-acetyl-alpha-D-glucosaminyl-(1-&gt;4)]-N-acetyl-alpha-D-muramoyl-L-alanyl-D-glutamyl-meso-2,6-diaminopimeloyl-D-alanyl-D-alanine + UDP + H(+). Its pathway is cell wall biogenesis; peptidoglycan biosynthesis. Functionally, cell wall formation. Catalyzes the transfer of a GlcNAc subunit on undecaprenyl-pyrophosphoryl-MurNAc-pentapeptide (lipid intermediate I) to form undecaprenyl-pyrophosphoryl-MurNAc-(pentapeptide)GlcNAc (lipid intermediate II). The protein is UDP-N-acetylglucosamine--N-acetylmuramyl-(pentapeptide) pyrophosphoryl-undecaprenol N-acetylglucosamine transferase of Idiomarina loihiensis (strain ATCC BAA-735 / DSM 15497 / L2-TR).